The following is a 405-amino-acid chain: Ubiquitin-like modifier-activating enzyme 5 (405 aa).

Residues 1 to 44 form a disordered region; that stretch reads MATVEELQTRVKQLEEELERERTRNRGGTDGGGGRKKIDQMSSE. The segment covering 7-24 has biased composition (basic and acidic residues); that stretch reads LQTRVKQLEEELERERTR. Residues Gly81, Asp102, Lys125, Asn148, and Asn182 each coordinate ATP. 2 residues coordinate Zn(2+): Cys224 and Cys227. Cys248 acts as the Glycyl thioester intermediate in catalysis. Cys301 and Cys306 together coordinate Zn(2+). The linker stretch occupies residues 346–377; sequence AETTEEELKAASHGHVPELVEGVHVAYVRPMT. The short motif at 390 to 405 is the UFC1-binding sequence (UFC) element; it reads DDQESLEDLMAKMKSI.

It belongs to the ubiquitin-activating E1 family. UBA5 subfamily. As to quaternary structure, homodimer; homodimerization is required for UFM1 activation. Interacts (via UIS motif) with UFM1; binds UFM1 via a trans-binding mechanism in which UFM1 interacts with distinct sites in both subunits of the UBA5 homodimer. Interacts (via C-terminus) with UFC1.

It localises to the cytoplasm. Its subcellular location is the nucleus. The protein resides in the endoplasmic reticulum membrane. It is found in the golgi apparatus. Functionally, E1-like enzyme which specifically catalyzes the first step in ufmylation. Activates UFM1 by first adenylating its C-terminal glycine residue with ATP, and thereafter linking this residue to the side chain of a cysteine residue in E1, yielding a UFM1-E1 thioester and free AMP. Activates UFM1 via a trans-binding mechanism, in which UFM1 interacts with distinct sites in both subunits of the UBA5 homodimer. Trans-binding also promotes stabilization of the UBA5 homodimer, and enhances ATP-binding. Transfer of UFM1 from UBA5 to the E2-like enzyme UFC1 also takes place using a trans mechanism. The protein is Ubiquitin-like modifier-activating enzyme 5 of Branchiostoma floridae (Florida lancelet).